The chain runs to 469 residues: Aspartyl/glutamyl-tRNA(Asn/Gln) amidotransferase subunit B (469 aa).

It belongs to the GatB/GatE family. GatB subfamily. Heterotrimer of A, B and C subunits.

The enzyme catalyses L-glutamyl-tRNA(Gln) + L-glutamine + ATP + H2O = L-glutaminyl-tRNA(Gln) + L-glutamate + ADP + phosphate + H(+). It carries out the reaction L-aspartyl-tRNA(Asn) + L-glutamine + ATP + H2O = L-asparaginyl-tRNA(Asn) + L-glutamate + ADP + phosphate + 2 H(+). In terms of biological role, allows the formation of correctly charged Asn-tRNA(Asn) or Gln-tRNA(Gln) through the transamidation of misacylated Asp-tRNA(Asn) or Glu-tRNA(Gln) in organisms which lack either or both of asparaginyl-tRNA or glutaminyl-tRNA synthetases. The reaction takes place in the presence of glutamine and ATP through an activated phospho-Asp-tRNA(Asn) or phospho-Glu-tRNA(Gln). This Methanococcus maripaludis (strain C5 / ATCC BAA-1333) protein is Aspartyl/glutamyl-tRNA(Asn/Gln) amidotransferase subunit B.